A 228-amino-acid polypeptide reads, in one-letter code: 7-cyano-7-deazaguanine synthase (228 aa).

9 to 19 (LSGGPDSTTVL) is a binding site for ATP. Zn(2+) is bound by residues C193, C203, C206, and C209.

Belongs to the QueC family. The cofactor is Zn(2+).

The enzyme catalyses 7-carboxy-7-deazaguanine + NH4(+) + ATP = 7-cyano-7-deazaguanine + ADP + phosphate + H2O + H(+). It functions in the pathway purine metabolism; 7-cyano-7-deazaguanine biosynthesis. Functionally, catalyzes the ATP-dependent conversion of 7-carboxy-7-deazaguanine (CDG) to 7-cyano-7-deazaguanine (preQ(0)). The sequence is that of 7-cyano-7-deazaguanine synthase from Rickettsia massiliae (strain Mtu5).